The chain runs to 197 residues: Pyridoxal 5'-phosphate synthase subunit PdxT (197 aa).

52–54 (GES) is a binding site for L-glutamine. The active-site Nucleophile is cysteine 83. Residues arginine 115 and 142-143 (IR) contribute to the L-glutamine site. Catalysis depends on charge relay system residues histidine 178 and glutamate 180.

Belongs to the glutaminase PdxT/SNO family. In terms of assembly, in the presence of PdxS, forms a dodecamer of heterodimers. Only shows activity in the heterodimer.

It carries out the reaction aldehydo-D-ribose 5-phosphate + D-glyceraldehyde 3-phosphate + L-glutamine = pyridoxal 5'-phosphate + L-glutamate + phosphate + 3 H2O + H(+). The catalysed reaction is L-glutamine + H2O = L-glutamate + NH4(+). It functions in the pathway cofactor biosynthesis; pyridoxal 5'-phosphate biosynthesis. Its function is as follows. Catalyzes the hydrolysis of glutamine to glutamate and ammonia as part of the biosynthesis of pyridoxal 5'-phosphate. The resulting ammonia molecule is channeled to the active site of PdxS. The sequence is that of Pyridoxal 5'-phosphate synthase subunit PdxT from Korarchaeum cryptofilum (strain OPF8).